We begin with the raw amino-acid sequence, 107 residues long: Rhodocoxin (107 aa).

The 105-residue stretch at 2–106 (PTVTYVHPDG…GLIVRLPEEQ (105 aa)) folds into the 2Fe-2S ferredoxin-type domain. [2Fe-2S] cluster contacts are provided by Cys40, Cys46, Cys49, and Cys87.

It belongs to the adrenodoxin/putidaredoxin family. It depends on [2Fe-2S] cluster as a cofactor.

In terms of biological role, ferredoxin-type protein which transfers electrons from rhodocoxin reductase to cytochrome CYP116 (ThcB), which is involved in the degradation of thiocarbamate herbicides. The sequence is that of Rhodocoxin (thcC) from Rhodococcus erythropolis (Arthrobacter picolinophilus).